A 495-amino-acid chain; its full sequence is Divinyl ether synthase CYP74M3 (495 aa).

C446 contacts heme.

The protein belongs to the cytochrome P450 family. Heme is required as a cofactor.

The catalysed reaction is (13S)-hydroperoxy-(9Z,11E)-octadecadienoate = etheroleate + H2O. It carries out the reaction (13S)-hydroperoxy-(9Z,11E,15Z)-octadecatrienoate = etherolenate + H2O. The protein operates within lipid metabolism; oxylipin biosynthesis. Divinyl ether synthase involved in oxylipin biosynthesis. Catalyzes the conversion of (13S)-hydroperoxy-(9Z,11E)-octadecadienoate (13-HPOD) to etheroleate and (13S)-hydroperoxy-(9Z,11E,15Z)-octadecatrienoate (13-HPOT) to etherolenate. Has no activity with the corresponding 9-hydroperoxides (9-HPOD and 9-HPOT). The chain is Divinyl ether synthase CYP74M3 from Selaginella moellendorffii (Spikemoss).